We begin with the raw amino-acid sequence, 76 residues long: Antimicrobial peptide lumbricin-1 (76 aa).

Positions 1-14 are cleaved as a propeptide — removed in mature form; the sequence is MSLCISDYLYLTLT.

In terms of biological role, displays antimicrobial activity against the Gram-positive bacteria B.subtilis ATCC 62037, S.aureus ATCC 15752 and S.mutans ATCC 25175, the Gram-negative bacteria E.coli ATCC 27325, P.putida ATCC 17426 and Serratia sp. ATCC 21074, and the fungi C.albicans ATCC 10231, C.neoformans ATCC 34881 and S.cerevisiae ATCC 44774. Does not possess hemolytic activity. This chain is Antimicrobial peptide lumbricin-1, found in Lumbricus rubellus (Humus earthworm).